The primary structure comprises 177 residues: Large ribosomal subunit protein uL6 (177 aa).

The protein belongs to the universal ribosomal protein uL6 family. As to quaternary structure, part of the 50S ribosomal subunit.

In terms of biological role, this protein binds to the 23S rRNA, and is important in its secondary structure. It is located near the subunit interface in the base of the L7/L12 stalk, and near the tRNA binding site of the peptidyltransferase center. This chain is Large ribosomal subunit protein uL6, found in Sinorhizobium fredii (strain NBRC 101917 / NGR234).